Consider the following 380-residue polypeptide: Cytochrome b (380 aa).

4 helical membrane-spanning segments follow: residues 34–54 (FGSLLGICLLTQILTGLLLAT), 78–99 (WLIRNLHANGASFFFICIYLHI), 114–134 (WNTGVILLLALMATAFVGYVL), and 179–199 (FFALHFLLPFMIAGLALIHLT). Heme b contacts are provided by His84 and His98. Residues His183 and His197 each coordinate heme b. His202 serves as a coordination point for a ubiquinone. The next 4 membrane-spanning stretches (helical) occupy residues 227–247 (LKDILGFIIMFLPLTTLALFS), 289–309 (LGGVLALAASVLVLFLAPLLH), 321–341 (FSQFLFWTLAANLFILTWVGS), and 348–368 (FIIIGQLASLTYFTILLLLFP).

Belongs to the cytochrome b family. In terms of assembly, the cytochrome bc1 complex contains 11 subunits: 3 respiratory subunits (MT-CYB, CYC1 and UQCRFS1), 2 core proteins (UQCRC1 and UQCRC2) and 6 low-molecular weight proteins (UQCRH/QCR6, UQCRB/QCR7, UQCRQ/QCR8, UQCR10/QCR9, UQCR11/QCR10 and a cleavage product of UQCRFS1). This cytochrome bc1 complex then forms a dimer. Heme b serves as cofactor.

The protein resides in the mitochondrion inner membrane. In terms of biological role, component of the ubiquinol-cytochrome c reductase complex (complex III or cytochrome b-c1 complex) that is part of the mitochondrial respiratory chain. The b-c1 complex mediates electron transfer from ubiquinol to cytochrome c. Contributes to the generation of a proton gradient across the mitochondrial membrane that is then used for ATP synthesis. The chain is Cytochrome b (MT-CYB) from Alca torda (Razorbill).